A 93-amino-acid chain; its full sequence is Co-chaperonin GroES (93 aa).

This sequence belongs to the GroES chaperonin family. In terms of assembly, heptamer of 7 subunits arranged in a ring. Interacts with the chaperonin GroEL.

The protein resides in the cytoplasm. Together with the chaperonin GroEL, plays an essential role in assisting protein folding. The GroEL-GroES system forms a nano-cage that allows encapsulation of the non-native substrate proteins and provides a physical environment optimized to promote and accelerate protein folding. GroES binds to the apical surface of the GroEL ring, thereby capping the opening of the GroEL channel. This chain is Co-chaperonin GroES, found in Streptococcus anginosus.